The sequence spans 549 residues: Oxygen-dependent choline dehydrogenase (549 aa).

4 to 33 contacts FAD; it reads DFVIIGSGSAGSAMASRLSEDGKHTVIVLE. The Proton acceptor role is filled by His-465.

It belongs to the GMC oxidoreductase family. It depends on FAD as a cofactor.

It catalyses the reaction choline + A = betaine aldehyde + AH2. The catalysed reaction is betaine aldehyde + NAD(+) + H2O = glycine betaine + NADH + 2 H(+). It participates in amine and polyamine biosynthesis; betaine biosynthesis via choline pathway; betaine aldehyde from choline (cytochrome c reductase route): step 1/1. Functionally, involved in the biosynthesis of the osmoprotectant glycine betaine. Catalyzes the oxidation of choline to betaine aldehyde and betaine aldehyde to glycine betaine at the same rate. The protein is Oxygen-dependent choline dehydrogenase of Rhizobium rhizogenes (strain K84 / ATCC BAA-868) (Agrobacterium radiobacter).